Here is a 335-residue protein sequence, read N- to C-terminus: Mycobacterial beta-ketoacyl-[acyl-carrier-protein] synthase III (335 aa).

Active-site residues include Cys-122 and His-258. The segment at 259–263 (QANSR) is ACP-binding. Residue Asn-289 is part of the active site.

This sequence belongs to the thiolase-like superfamily. FabH family. Homodimer.

It is found in the cytoplasm. The enzyme catalyses malonyl-[ACP] + dodecanoyl-CoA + H(+) = 3-oxotetradecanoyl-[ACP] + CO2 + CoA. It functions in the pathway lipid metabolism; fatty acid biosynthesis. The protein operates within lipid metabolism; mycolic acid biosynthesis. In terms of biological role, catalyzes the condensation reaction of fatty acid synthesis by the addition to an acyl acceptor of two carbons from malonyl-ACP. Catalyzes the first condensation reaction which initiates fatty acid synthesis and may therefore play a role in governing the total rate of fatty acid production. Possesses both acetoacetyl-ACP synthase and acetyl transacylase activities. Its substrate specificity determines the biosynthesis of branched-chain and/or straight-chain of fatty acids. This chain is Mycobacterial beta-ketoacyl-[acyl-carrier-protein] synthase III, found in Mycobacterium bovis (strain ATCC BAA-935 / AF2122/97).